Reading from the N-terminus, the 300-residue chain is 4-hydroxy-tetrahydrodipicolinate synthase (300 aa).

A pyruvate-binding site is contributed by Thr55. Residue Tyr143 is the Proton donor/acceptor of the active site. Lys171 serves as the catalytic Schiff-base intermediate with substrate. Ile211 contacts pyruvate.

The protein belongs to the DapA family. In terms of assembly, homotetramer; dimer of dimers.

The protein resides in the cytoplasm. The enzyme catalyses L-aspartate 4-semialdehyde + pyruvate = (2S,4S)-4-hydroxy-2,3,4,5-tetrahydrodipicolinate + H2O + H(+). It participates in amino-acid biosynthesis; L-lysine biosynthesis via DAP pathway; (S)-tetrahydrodipicolinate from L-aspartate: step 3/4. Its function is as follows. Catalyzes the condensation of (S)-aspartate-beta-semialdehyde [(S)-ASA] and pyruvate to 4-hydroxy-tetrahydrodipicolinate (HTPA). The polypeptide is 4-hydroxy-tetrahydrodipicolinate synthase (Mycobacterium leprae (strain Br4923)).